We begin with the raw amino-acid sequence, 677 residues long: L-type lectin-domain containing receptor kinase IV.2 (677 aa).

The first 22 residues, 1–22 (MFVKLKLIFFFFLLCQIMISSS), serve as a signal peptide directing secretion. Residues 23–291 (QNLNFTYNGF…EPRRISEFYK (269 aa)) lie on the Extracellular side of the membrane. Residues 24–262 (NLNFTYNGFH…EHFLVGWSFR (239 aa)) are legume-lectin like. N-linked (GlcNAc...) asparagine glycosylation is found at Asn26, Asn57, Asn81, Asn128, Asn134, Asn171, Asn186, and Asn203. Residues 292–312 (IGMPLISLSLIFSIIFLAFYI) form a helical membrane-spanning segment. Over 313–677 (VRRKKKYEEE…IADSLLSGGR (365 aa)) the chain is Cytoplasmic. The 279-residue stretch at 347-625 (FKEKDLLGSG…LQYLRGDMAL (279 aa)) folds into the Protein kinase domain. Residues 353–361 (LGSGGFGRV) and Lys376 each bind ATP. Residue Asp472 is the Proton acceptor of the active site.

The protein in the C-terminal section; belongs to the protein kinase superfamily. Ser/Thr protein kinase family. It in the N-terminal section; belongs to the leguminous lectin family.

It localises to the cell membrane. The catalysed reaction is L-seryl-[protein] + ATP = O-phospho-L-seryl-[protein] + ADP + H(+). The enzyme catalyses L-threonyl-[protein] + ATP = O-phospho-L-threonyl-[protein] + ADP + H(+). In terms of biological role, required during pollen development. Involved in resistance response to the pathogenic bacteria Pseudomonas syringae. This is L-type lectin-domain containing receptor kinase IV.2 from Arabidopsis thaliana (Mouse-ear cress).